The chain runs to 206 residues: Ion-translocating oxidoreductase complex subunit G (206 aa).

Residues 9-29 (GITLALFAAGSTGLTAAINQM) form a helical membrane-spanning segment. At Thr-174 the chain carries FMN phosphoryl threonine.

It belongs to the RnfG family. As to quaternary structure, the complex is composed of six subunits: RsxA, RsxB, RsxC, RsxD, RsxE and RsxG. FMN is required as a cofactor.

It is found in the cell inner membrane. Functionally, part of a membrane-bound complex that couples electron transfer with translocation of ions across the membrane. Required to maintain the reduced state of SoxR. This chain is Ion-translocating oxidoreductase complex subunit G, found in Escherichia coli O157:H7.